The chain runs to 261 residues: Triosephosphate isomerase (261 aa).

Position 10–12 (10–12 (NWK)) interacts with substrate. Histidine 100 acts as the Electrophile in catalysis. Glutamate 172 acts as the Proton acceptor in catalysis. Substrate is bound by residues glycine 178, serine 218, and 239–240 (GG).

The protein belongs to the triosephosphate isomerase family. In terms of assembly, homodimer.

The protein localises to the cytoplasm. The catalysed reaction is D-glyceraldehyde 3-phosphate = dihydroxyacetone phosphate. It participates in carbohydrate biosynthesis; gluconeogenesis. Its pathway is carbohydrate degradation; glycolysis; D-glyceraldehyde 3-phosphate from glycerone phosphate: step 1/1. Involved in the gluconeogenesis. Catalyzes stereospecifically the conversion of dihydroxyacetone phosphate (DHAP) to D-glyceraldehyde-3-phosphate (G3P). This Mycobacterium sp. (strain JLS) protein is Triosephosphate isomerase.